Consider the following 262-residue polypeptide: Ribosomal RNA small subunit methyltransferase A (262 aa).

S-adenosyl-L-methionine is bound by residues asparagine 14, leucine 16, glycine 41, glutamate 63, aspartate 85, and asparagine 105.

The protein belongs to the class I-like SAM-binding methyltransferase superfamily. rRNA adenine N(6)-methyltransferase family. RsmA subfamily.

The protein resides in the cytoplasm. It catalyses the reaction adenosine(1518)/adenosine(1519) in 16S rRNA + 4 S-adenosyl-L-methionine = N(6)-dimethyladenosine(1518)/N(6)-dimethyladenosine(1519) in 16S rRNA + 4 S-adenosyl-L-homocysteine + 4 H(+). Functionally, specifically dimethylates two adjacent adenosines (A1518 and A1519) in the loop of a conserved hairpin near the 3'-end of 16S rRNA in the 30S particle. May play a critical role in biogenesis of 30S subunits. In Maridesulfovibrio salexigens (strain ATCC 14822 / DSM 2638 / NCIMB 8403 / VKM B-1763) (Desulfovibrio salexigens), this protein is Ribosomal RNA small subunit methyltransferase A.